The chain runs to 574 residues: FAD-linked oxidoreductase penH (574 aa).

Residues 1–25 (MLPRALTLSALLALLLAIYLALAPA) form the signal peptide. N-linked (GlcNAc...) asparagine glycans are attached at residues Asn48, Asn107, Asn193, Asn368, and Asn385. The FAD-binding PCMH-type domain maps to 121 to 305 (HQGRIPLYAA…VRVTMRTYPD (185 aa)).

Belongs to the oxygen-dependent FAD-linked oxidoreductase family. Requires FAD as cofactor.

The catalysed reaction is peniprequinolone + A = yaequinolone E + AH2. Its pathway is secondary metabolite biosynthesis. The protein operates within alkaloid biosynthesis. It participates in mycotoxin biosynthesis. Its function is as follows. FAD-linked oxidoreductase; part of the gene cluster that mediates the biosynthesis of penigequinolones, potent insecticidal alkaloids that contain a highly modified 10-carbon prenyl group. The first stage is catalyzed by the nonribosomal peptide synthetase penN that condenses anthranilic acid and O-methyl-L-tyrosine to produce 4'-methoxycyclopeptin. 4'-methoxycyclopeptin is then converted to 4'-methoxydehydrocyclopeptin by the ketoglutarate-dependent dioxygenase penM through dehydrogenation to form a double bond between C-alpha and C-beta of the O-methyltyrosine side chain. PenM also converts its first product methoxydehydrocyclopeptin to 4'-methoxycyclopenin. The following conversion of 4'methoxycyclopenin into 4'-methoxyviridicatin is catalyzed by the cyclopenase penL. 4'-methoxyviridicatin is the precursor of quinolone natural products, and is further converted to quinolinone B. The prenyltransferase penI then catalyzes the canonical Friedel-Crafts alkylation of quinolinone B with dimethylallyl cation to yield dimethylallyl quinolone, which is subjected to FAD-dependent dehydrogenation by the FAD-linked oxidoreductase penH to yield conjugated aryl diene. The delta(3') double bond then serves as the site of the second alkylation with DMAPP catalyzed by the prenyltransferase penG to yield a carbenium ion intermediate, which can be attacked by H(2)O to yield a styrenyl quinolone containing a C3'-hydroxyprenyl chain, or undergo cyclization to yield yaequinolones J1 and J2. The conversion of the styrenyl quinolone into the tetrahydrofuran-containing yaequinolone C is performed by the FAD-dependent monooxygenase penE and involves epoxidation of the terminal C7'-C8' olefin, followed by epoxide ring opening initiated by the C3' hydroxyl group. The predicted cysteine hydrolase penJ acts as an epoxide hydrolase that enhances the rate of the 5-exo-tet cyclization step, increasing the yield of yaequinolone C. PenF catalyzes the cationic rearrangement of the epoxide formed by penE (before ring opening to produce yaequinolone C) into yaequinolone D. Finally, the short-chain dehydrogenase/reductase (SDR)-like reductase penD, catalyzes both the dehydration of yaequinolone D and the reduction of the resulting oxonium to yield penigequinolone. This is FAD-linked oxidoreductase penH from Penicillium thymicola.